The primary structure comprises 664 residues: Threonine--tRNA ligase (664 aa).

One can recognise a TGS domain in the interval 1–64; it reads MSELLKITLP…TADAQLALVT (64 aa). The tract at residues 250-559 is catalytic; that stretch reads DHRKLGNEMD…LIEHFAGRLP (310 aa). Zn(2+) contacts are provided by cysteine 355, histidine 406, and histidine 536.

Belongs to the class-II aminoacyl-tRNA synthetase family. As to quaternary structure, homodimer. The cofactor is Zn(2+).

It localises to the cytoplasm. The enzyme catalyses tRNA(Thr) + L-threonine + ATP = L-threonyl-tRNA(Thr) + AMP + diphosphate + H(+). Functionally, catalyzes the attachment of threonine to tRNA(Thr) in a two-step reaction: L-threonine is first activated by ATP to form Thr-AMP and then transferred to the acceptor end of tRNA(Thr). Also edits incorrectly charged L-seryl-tRNA(Thr). The chain is Threonine--tRNA ligase from Novosphingobium aromaticivorans (strain ATCC 700278 / DSM 12444 / CCUG 56034 / CIP 105152 / NBRC 16084 / F199).